Here is a 345-residue protein sequence, read N- to C-terminus: MTDAPLSEAMKPIIFSASEGPLSRAQAEEAFNLMFEGLASPAQMGGLIMAIRARGESVAEYAAAAQVMRDRCVKVSAPDGAMDIVGTGGDGMGTLNISTATAFVVAGAGVPVAKHGNRNLSSKSGAADVLTQMGINVMVGAAVVEQSLKEAGIGFMMAPMHHPAVKHVMPIRQELGCKTIFNILGPLTNPAGAKRQLTGAFAIDLIYPMAETLKELGSEAAWLVHGSDGTDEISISGKTDVVELKDGALRSRVVHPEDAGLPVHPFRDILGGTPDENAQAFRDLLDGAQGAYRDAVLLNAAAALIVAGRVTELRDGVEIARESIDSGAAKRAVEAVARVTSTSTA.

5-phospho-alpha-D-ribose 1-diphosphate is bound by residues glycine 86, 89-90 (GD), threonine 94, 96-99 (NIST), 114-122 (KHGNRNLSS), and alanine 126. Glycine 86 serves as a coordination point for anthranilate. Mg(2+) is bound at residue serine 98. Asparagine 117 serves as a coordination point for anthranilate. Arginine 172 serves as a coordination point for anthranilate. Mg(2+) is bound by residues aspartate 231 and glutamate 232.

It belongs to the anthranilate phosphoribosyltransferase family. As to quaternary structure, homodimer. Mg(2+) is required as a cofactor.

The enzyme catalyses N-(5-phospho-beta-D-ribosyl)anthranilate + diphosphate = 5-phospho-alpha-D-ribose 1-diphosphate + anthranilate. It functions in the pathway amino-acid biosynthesis; L-tryptophan biosynthesis; L-tryptophan from chorismate: step 2/5. Its function is as follows. Catalyzes the transfer of the phosphoribosyl group of 5-phosphorylribose-1-pyrophosphate (PRPP) to anthranilate to yield N-(5'-phosphoribosyl)-anthranilate (PRA). The chain is Anthranilate phosphoribosyltransferase from Jannaschia sp. (strain CCS1).